The sequence spans 429 residues: Probable M18 family aminopeptidase 2 (429 aa).

Zn(2+) is bound by residues histidine 82, histidine 156, and histidine 401.

It belongs to the peptidase M18 family. It depends on Zn(2+) as a cofactor.

The chain is Probable M18 family aminopeptidase 2 from Pseudomonas syringae pv. syringae (strain B728a).